We begin with the raw amino-acid sequence, 108 residues long: Nucleoid-associated protein PSPTO_3645 (108 aa).

Residues 85–96 (QASQDKTASMTA) are compositionally biased toward polar residues. Positions 85–108 (QASQDKTASMTAGMQLPPGMKLPF) are disordered.

Belongs to the YbaB/EbfC family. In terms of assembly, homodimer.

It is found in the cytoplasm. The protein localises to the nucleoid. Functionally, binds to DNA and alters its conformation. May be involved in regulation of gene expression, nucleoid organization and DNA protection. The chain is Nucleoid-associated protein PSPTO_3645 from Pseudomonas syringae pv. tomato (strain ATCC BAA-871 / DC3000).